A 437-amino-acid polypeptide reads, in one-letter code: Elongation factor 1-alpha (437 aa).

The region spanning 4–229 (KPHMNLVVIG…DQLQPPAKPV (226 aa)) is the tr-type G domain. Residues 13–20 (GHVDHGKS) are G1. Position 13-20 (13-20 (GHVDHGKS)) interacts with GTP. Residue serine 20 coordinates Mg(2+). The G2 stretch occupies residues 69 to 73 (GITID). A G3 region spans residues 90-93 (DAPG). GTP contacts are provided by residues 90-94 (DAPGH) and 152-155 (NKMD). The G4 stretch occupies residues 152–155 (NKMD). The tract at residues 193–195 (SAW) is G5.

The protein belongs to the TRAFAC class translation factor GTPase superfamily. Classic translation factor GTPase family. EF-Tu/EF-1A subfamily.

The protein localises to the cytoplasm. It catalyses the reaction GTP + H2O = GDP + phosphate + H(+). GTP hydrolase that promotes the GTP-dependent binding of aminoacyl-tRNA to the A-site of ribosomes during protein biosynthesis. This Aeropyrum pernix (strain ATCC 700893 / DSM 11879 / JCM 9820 / NBRC 100138 / K1) protein is Elongation factor 1-alpha.